A 257-amino-acid chain; its full sequence is Major prion protein (257 aa).

An N-terminal signal peptide occupies residues methionine 1 to cysteine 24. Residues lysine 25–alanine 234 form an interaction with GRB2, ERI3 and SYN1 region. The interval arginine 27–lysine 114 is disordered. Repeat copies occupy residues proline 54–glutamine 62, proline 63–glutamine 70, proline 71–glutamine 78, proline 79–glutamine 86, and proline 87–glutamine 95. Residues proline 54–glutamine 95 form a 5 X 8 AA tandem repeats of P-H-G-G-G-W-G-Q region. Residues glutamine 55–glycine 101 are compositionally biased toward gly residues. Cu(2+) contacts are provided by histidine 64, glycine 65, glycine 66, histidine 72, glycine 73, glycine 74, histidine 80, glycine 81, glycine 82, histidine 88, glycine 90, and glycine 91. A disulfide bridge connects residues cysteine 183 and cysteine 218. N-linked (GlcNAc...) asparagine glycans are attached at residues asparagine 185 and asparagine 201. A lipid anchor (GPI-anchor amidated alanine) is attached at alanine 234. Residues serine 235–glycine 257 constitute a propeptide, removed in mature form.

This sequence belongs to the prion family. Monomer and homodimer. Has a tendency to aggregate into amyloid fibrils containing a cross-beta spine, formed by a steric zipper of superposed beta-strands. Soluble oligomers may represent an intermediate stage on the path to fibril formation. Copper binding may promote oligomerization. Interacts with GRB2, APP, ERI3/PRNPIP and SYN1. Mislocalized cytosolically exposed PrP interacts with MGRN1; this interaction alters MGRN1 subcellular location and causes lysosomal enlargement. Interacts with KIAA1191.

It is found in the cell membrane. Its subcellular location is the golgi apparatus. Its primary physiological function is unclear. Has cytoprotective activity against internal or environmental stresses. May play a role in neuronal development and synaptic plasticity. May be required for neuronal myelin sheath maintenance. May play a role in iron uptake and iron homeostasis. Soluble oligomers are toxic to cultured neuroblastoma cells and induce apoptosis (in vitro). Association with GPC1 (via its heparan sulfate chains) targets PRNP to lipid rafts. Also provides Cu(2+) or Zn(2+) for the ascorbate-mediated GPC1 deaminase degradation of its heparan sulfate side chains. The chain is Major prion protein (PRNP) from Mustela putorius furo (European domestic ferret).